We begin with the raw amino-acid sequence, 293 residues long: Inner membrane ABC transporter permease protein YcjO (293 aa).

At 1-12 (MNRLFSGRSDMP) the chain is on the periplasmic side. Residues 13–33 (FALLLLAPSLLLLGGLVAWPM) form a helical membrane-spanning segment. Residues 34–77 (VSNIEISFLRLPLNPNIESTFVGVSNYVRILSDPGFWHSLWMTV) lie on the Cytoplasmic side of the membrane. One can recognise an ABC transmembrane type-1 domain in the interval 73–283 (LWMTVWYTAL…IIIFAVILLT (211 aa)). Residues 78 to 98 (WYTALVVAGSTVLGLAVAMFF) form a helical membrane-spanning segment. Over 99–110 (NREFRLRKTARS) the chain is Periplasmic. The chain crosses the membrane as a helical span at residues 111 to 131 (LVILSYVTPSISLVFAWKYMF). At 132-135 (NNGY) the chain is on the cytoplasmic side. A helical transmembrane segment spans residues 136 to 156 (GIVNYLGVDLLHLYEQAPLWF). Topologically, residues 157–162 (DNPGSS) are periplasmic. The chain crosses the membrane as a helical span at residues 163–183 (FVLVVLFAIWRYFPYAFISFL). Over 184–214 (AILQTIDKSLYEAAEMDGANAWQRFRIVTLP) the chain is Cytoplasmic. The helical transmembrane segment at 215-235 (AIMPVLATVVTLRTIWMFYMF) threads the bilayer. Topologically, residues 236–261 (ADVYLLTTKVDILGVYLYKTAFAFND) are periplasmic. The helical transmembrane segment at 262–282 (LGKAAAISVVLFIIIFAVILL) threads the bilayer. Over 283 to 293 (TRKRVNLNGNK) the chain is Cytoplasmic.

The protein belongs to the binding-protein-dependent transport system permease family. MalFG subfamily.

The protein resides in the cell inner membrane. Probably part of the binding-protein-dependent transport system YcjNOP. Probably responsible for the translocation of the substrate across the membrane. The chain is Inner membrane ABC transporter permease protein YcjO (ycjO) from Escherichia coli (strain K12).